A 604-amino-acid polypeptide reads, in one-letter code: NADPH oxidase activator (604 aa).

TPR repeat units lie at residues 36–69 and 71–103; these read SKINYNIGVMYIKSNNFRNAIEYFNRSVEQDKYL and SSYYMRAIAHHMNGELNHAIVDYDETISKLRGH. Disordered regions lie at residues 180-298 and 383-581; these read FKPP…KLPS and DIIP…PYQV. Low complexity-rich tracts occupy residues 194-215 and 225-243; these read SATTSSIQSSSPSTPMSSSPPS and PSSSSPSSSSPSLSSSSSP. A compositionally biased stretch (pro residues) spans 244 to 260; sequence KLPPTPKPSFGSSPPPS. Residues 261–284 show a composition bias toward low complexity; the sequence is SSSSSSSSSSSSSSSISPLTNKTL. A PB1 domain is found at 309–384; the sequence is KITLKVFYKD…EINEINVKDI (76 aa). Low complexity-rich tracts occupy residues 396 to 424, 435 to 453, and 467 to 483; these read PDKTNNSTSSYSSSSSSSSSSSSSSSSSS, PKTTTRPILPPTTTTTTST, and FGSTPSSPSFSSPSSSS. Residues 502-528 show a composition bias toward polar residues; that stretch reads LLKQQNQTQSINIPPKVPTSSRPKMTQ. Residues 529 to 570 show a composition bias toward low complexity; it reads SHSPPSSSPLSSYSTSFQSVSSPSLSSSYNGSTSSYGGFSSS. A WW domain is found at 573 to 604; sequence PPTPYPYQVLYTDSNEKYYLNTETNETFWELP.

Functionally, may function as an activator of NOX1, a superoxide-producing NADPH oxidase. The sequence is that of NADPH oxidase activator (ncfA) from Dictyostelium discoideum (Social amoeba).